A 180-amino-acid polypeptide reads, in one-letter code: Symerythrin (180 aa).

Residues 17–127 (FQDAVSHNNT…RRALETALEV (111 aa)) constitute a cross-link (3-(L-phenylalan-2'-yl)-L-valine (Phe-Val)). The Ferritin-like diiron domain maps to 21 to 180 (VSHNNTDANA…RALENLLEVA (160 aa)). Glutamate 37, glutamate 40, glutamate 71, glutamate 128, glutamate 131, glutamate 162, and histidine 165 together coordinate Fe(3+).

In terms of assembly, monomer. Fe(3+) serves as cofactor.

It localises to the plastid. Its subcellular location is the cyanelle. Functionally, exhibits oxidase-like and peroxidase-like activities in vitro. The polypeptide is Symerythrin (Cyanophora paradoxa).